We begin with the raw amino-acid sequence, 862 residues long: Rho guanine nucleotide exchange factor 7 (862 aa).

A Calponin-homology (CH) domain is found at Met-1–Ala-112. 5 positions are modified to phosphoserine: Ser-132, Ser-155, Ser-164, Ser-228, and Ser-236. Residues Asn-163–Pro-222 enclose the SH3 domain. Residues Tyr-250–Val-430 enclose the DH domain. In terms of domain architecture, PH spans Asp-452–Lys-557. A Phosphoserine modification is found at Ser-497. Disordered stretches follow at residues Thr-559–Lys-591, Lys-657–Val-679, and Asp-728–Asp-748. A compositionally biased stretch (polar residues) spans Pro-572 to Ser-585. Over residues Lys-657 to Glu-669 the composition is skewed to basic residues. Residues Arg-670–Val-679 show a composition bias toward basic and acidic residues. Phosphoserine is present on Ser-673. Positions Ser-731–Leu-744 are enriched in low complexity. Ser-776 bears the Phosphoserine mark. A coiled-coil region spans residues Lys-804–Asp-854.

As to quaternary structure, interacts with PAK kinases through the SH3 domain. Interacts with unphosphorylated PAK1. Interacts with ITCH. Interacts with SCRIB; interaction is direct and may play a role in regulation of apoptosis. Interacts with GIT1 and TGFB1I1. Interacts with FRMPD4 (via N-terminus). Interacts with CaMK1. Interacts with BIN2. Interacts with PTK2/FAK1 and RAC1. Interacts with PARVB. Interacts with YWHAZ. Interacts (via PH domain) with NOX1 (via FAD-binding FR-type domain). Phosphorylated on Ser-673 by CaMK1; enhancement of GEF activity and downstream activation of RAC1. Phosphorylated by PTK2/FAK1; this promotes interaction with RAC1. Seems to be expressed in the central nervous system. Isoform B, isoform C and isoform E are expressed with highest levels in brain and testis.

It localises to the cell junction. The protein localises to the focal adhesion. The protein resides in the cell projection. It is found in the ruffle. Its subcellular location is the cytoplasm. It localises to the cell cortex. The protein localises to the lamellipodium. Functionally, acts as a RAC1 guanine nucleotide exchange factor (GEF) and can induce membrane ruffling. May function as a positive regulator of apoptosis. Functions in cell migration, attachment and cell spreading. Promotes targeting of RAC1 to focal adhesions. Downstream of NMDA receptors and CaMKK-CaMK1 signaling cascade, promotes the formation of spines and synapses in hippocampal neurons. This chain is Rho guanine nucleotide exchange factor 7 (Arhgef7), found in Mus musculus (Mouse).